The sequence spans 247 residues: Orotidine 5'-phosphate decarboxylase (247 aa).

Residues aspartate 16, lysine 38, 66 to 75 (DLKFHDIPNT), threonine 130, arginine 191, glutamine 200, glycine 220, and arginine 221 each bind substrate. Lysine 68 serves as the catalytic Proton donor.

This sequence belongs to the OMP decarboxylase family. Type 1 subfamily. Homodimer.

The enzyme catalyses orotidine 5'-phosphate + H(+) = UMP + CO2. It functions in the pathway pyrimidine metabolism; UMP biosynthesis via de novo pathway; UMP from orotate: step 2/2. Functionally, catalyzes the decarboxylation of orotidine 5'-monophosphate (OMP) to uridine 5'-monophosphate (UMP). This Rhodospirillum rubrum (strain ATCC 11170 / ATH 1.1.1 / DSM 467 / LMG 4362 / NCIMB 8255 / S1) protein is Orotidine 5'-phosphate decarboxylase.